The following is a 179-amino-acid chain: 3-hydroxyanthranilate 3,4-dioxygenase (179 aa).

Arg47 provides a ligand contact to O2. Fe cation contacts are provided by His51, Glu57, and His96. Glu57 contacts substrate. Residues Arg100 and Glu110 each coordinate substrate. 4 residues coordinate Fe cation: Cys125, Cys128, Cys162, and Cys165.

The protein belongs to the 3-HAO family. The cofactor is Fe(2+).

It catalyses the reaction 3-hydroxyanthranilate + O2 = (2Z,4Z)-2-amino-3-carboxymuconate 6-semialdehyde. Its pathway is cofactor biosynthesis; NAD(+) biosynthesis; quinolinate from L-kynurenine: step 3/3. Catalyzes the oxidative ring opening of 3-hydroxyanthranilate to 2-amino-3-carboxymuconate semialdehyde, which spontaneously cyclizes to quinolinate. In Bacillus thuringiensis (strain Al Hakam), this protein is 3-hydroxyanthranilate 3,4-dioxygenase.